The sequence spans 209 residues: Uracil phosphoribosyltransferase (209 aa).

Residues R79, R104, and 131–139 each bind 5-phospho-alpha-D-ribose 1-diphosphate; that span reads DPMLATGNS. Uracil-binding positions include I194 and 199-201; that span reads GDA. Residue D200 coordinates 5-phospho-alpha-D-ribose 1-diphosphate.

The protein belongs to the UPRTase family. Requires Mg(2+) as cofactor.

It catalyses the reaction UMP + diphosphate = 5-phospho-alpha-D-ribose 1-diphosphate + uracil. It participates in pyrimidine metabolism; UMP biosynthesis via salvage pathway; UMP from uracil: step 1/1. With respect to regulation, allosterically activated by GTP. Functionally, catalyzes the conversion of uracil and 5-phospho-alpha-D-ribose 1-diphosphate (PRPP) to UMP and diphosphate. The chain is Uracil phosphoribosyltransferase from Polaromonas naphthalenivorans (strain CJ2).